The primary structure comprises 419 residues: 3-isopropylmalate dehydratase large subunit (419 aa).

[4Fe-4S] cluster-binding residues include C300, C360, and C363.

The protein belongs to the aconitase/IPM isomerase family. LeuC type 2 subfamily. In terms of assembly, heterodimer of LeuC and LeuD. It depends on [4Fe-4S] cluster as a cofactor.

It catalyses the reaction (2R,3S)-3-isopropylmalate = (2S)-2-isopropylmalate. It participates in amino-acid biosynthesis; L-leucine biosynthesis; L-leucine from 3-methyl-2-oxobutanoate: step 2/4. In terms of biological role, catalyzes the isomerization between 2-isopropylmalate and 3-isopropylmalate, via the formation of 2-isopropylmaleate. The protein is 3-isopropylmalate dehydratase large subunit of Clostridium botulinum (strain Eklund 17B / Type B).